A 483-amino-acid polypeptide reads, in one-letter code: MAYIEGNTGKWEYIIGLEIHAQISSKSKLFSGSSTIFAANPNSQVSYVDAAMPGMLPVLNKHCVYQAIKTGLGLKAKINKYSVFDRKNYFYADLPQGYQISQFYYPIVQNGTMEIPTSTGDLKTIRINRLHLEQDAGKSMHDQSPHYSFIDLNRAGIGLMEIVTEPDISSPDEAAEFVKKLRNLLRYIGSCDGDMEKGSMRCDANISVRRSGEPLGTRCEIKNINSIRNIIKAIEFEAKRQVDLLENGEAIIQETRLFNADSGETKTMRLKEEALDYRYFPDPDLLPLVISDELINELKANLPELPDQKIEKYTKEFGLSKYDAEVIVADESVAEYFEKAANECNPKMLTNWLTSELFGQLNKASIGINECKITPSNFAKLVKLIENDTISGKIAKTVFEIMFETGKAPDKIVEEKGLVQVSDNNVLNTVIDEVIAENPESVEGYKRGKDKLFGFFVGQVMKKTGGKANPTLVNQLLKDKLDS.

It belongs to the GatB/GatE family. GatB subfamily. As to quaternary structure, heterotrimer of A, B and C subunits.

The catalysed reaction is L-glutamyl-tRNA(Gln) + L-glutamine + ATP + H2O = L-glutaminyl-tRNA(Gln) + L-glutamate + ADP + phosphate + H(+). The enzyme catalyses L-aspartyl-tRNA(Asn) + L-glutamine + ATP + H2O = L-asparaginyl-tRNA(Asn) + L-glutamate + ADP + phosphate + 2 H(+). In terms of biological role, allows the formation of correctly charged Asn-tRNA(Asn) or Gln-tRNA(Gln) through the transamidation of misacylated Asp-tRNA(Asn) or Glu-tRNA(Gln) in organisms which lack either or both of asparaginyl-tRNA or glutaminyl-tRNA synthetases. The reaction takes place in the presence of glutamine and ATP through an activated phospho-Asp-tRNA(Asn) or phospho-Glu-tRNA(Gln). The chain is Aspartyl/glutamyl-tRNA(Asn/Gln) amidotransferase subunit B from Rickettsia felis (strain ATCC VR-1525 / URRWXCal2) (Rickettsia azadi).